Here is a 450-residue protein sequence, read N- to C-terminus: tRNA (guanine-N(7)-)-methyltransferase non-catalytic subunit TRM82 (450 aa).

Over residues 69 to 82 (AAKKLKTNEGEAIE) the composition is skewed to basic and acidic residues. The disordered stretch occupies residues 69–103 (AAKKLKTNEGEAIERPGNQRRVPLPGKDPKVPVPG). WD repeat units follow at residues 108–147 (PVYQ…KDNC), 200–241 (GHVS…VIDK), and 245–285 (GHKE…LMSS).

It belongs to the WD repeat TRM82 family. Forms a heterodimer with the catalytic subunit TRM8.

It localises to the nucleus. It functions in the pathway tRNA modification; N(7)-methylguanine-tRNA biosynthesis. In terms of biological role, required for the formation of N(7)-methylguanine at position 46 (m7G46) in tRNA. In the complex, it is required to stabilize and induce conformational changes of the catalytic subunit. This is tRNA (guanine-N(7)-)-methyltransferase non-catalytic subunit TRM82 from Eremothecium gossypii (strain ATCC 10895 / CBS 109.51 / FGSC 9923 / NRRL Y-1056) (Yeast).